The sequence spans 265 residues: Glutamate racemase (265 aa).

Substrate contacts are provided by residues 10 to 11 and 42 to 43; these read DS and YG. The active-site Proton donor/acceptor is the Cys-73. 74–75 serves as a coordination point for substrate; sequence NT. Cys-183 functions as the Proton donor/acceptor in the catalytic mechanism. 184 to 185 is a binding site for substrate; sequence TH.

This sequence belongs to the aspartate/glutamate racemases family.

It catalyses the reaction L-glutamate = D-glutamate. Its pathway is cell wall biogenesis; peptidoglycan biosynthesis. Functionally, provides the (R)-glutamate required for cell wall biosynthesis. This Corynebacterium diphtheriae (strain ATCC 700971 / NCTC 13129 / Biotype gravis) protein is Glutamate racemase.